The sequence spans 597 residues: Elongation factor 4 (597 aa).

The tr-type G domain maps to 2–184; that stretch reads KNIRNFSIIA…EIVAKIPAPT (183 aa). Residues 14–19 and 131–134 each bind GTP; these read DHGKST and NKID.

It belongs to the TRAFAC class translation factor GTPase superfamily. Classic translation factor GTPase family. LepA subfamily.

It localises to the cell inner membrane. It catalyses the reaction GTP + H2O = GDP + phosphate + H(+). Required for accurate and efficient protein synthesis under certain stress conditions. May act as a fidelity factor of the translation reaction, by catalyzing a one-codon backward translocation of tRNAs on improperly translocated ribosomes. Back-translocation proceeds from a post-translocation (POST) complex to a pre-translocation (PRE) complex, thus giving elongation factor G a second chance to translocate the tRNAs correctly. Binds to ribosomes in a GTP-dependent manner. In Neisseria meningitidis serogroup B (strain ATCC BAA-335 / MC58), this protein is Elongation factor 4.